We begin with the raw amino-acid sequence, 313 residues long: Formate-nitrite transporter (313 aa).

The Cytoplasmic portion of the chain corresponds to 1-47; it reads MPKSNTKYVIDPLSVKTSCSSEESYIRCVEYGKSKAHYSSLILLAKA. The chain crosses the membrane as a helical span at residues 48–68; the sequence is ILAGVFVGVCAHASGIAGGLF. Topologically, residues 69–77 are extracellular; that stretch reads YYHKLREYV. A helical transmembrane segment spans residues 78–98; that stretch reads GASMSAFVYGFTFPIAFLCII. Over 99–128 the chain is Cytoplasmic; sequence CTGSDLFTGNTLAVTTALLHGKVSCLEYVR. The chain crosses the membrane as a helical span at residues 129–149; it reads VMCISLFGNYVGAVSFAFFVS. The Extracellular portion of the chain corresponds to 150–185; that stretch reads YGSGAFHKKEQVDKNHIFQFLNDIAVKKVNHTFVEC. An N-linked (GlcNAc...) asparagine glycan is attached at asparagine 179. Residues 186–206 form a helical membrane-spanning segment; that stretch reads ICLAIGCNIFVCLAVYFVLSI. The Cytoplasmic segment spans residues 207 to 211; the sequence is KDGSG. The chain crosses the membrane as a helical span at residues 212–232; that stretch reads MVFSVFFAVYAFAIAGYEHII. The Extracellular segment spans residues 233 to 260; that stretch reads ANIYTLNISLMIDTEVSFTQVYFKNLLP. Asparagine 239 carries an N-linked (GlcNAc...) asparagine glycan. The chain crosses the membrane as a helical span at residues 261–281; the sequence is TLIGNYIAGALVLACPLFFIY. The Cytoplasmic segment spans residues 282–313; that stretch reads RSYYINYEKMNEPSGGSLRSISIEMKNDGGAT.

This sequence belongs to the FNT transporter (TC 1.A.16) family. As to quaternary structure, homopentamer.

Its subcellular location is the cell membrane. It is found in the vacuole membrane. It carries out the reaction (S)-lactate(in) + H(+)(in) = (S)-lactate(out) + H(+)(out). The enzyme catalyses formate(in) + H(+)(in) = formate(out) + H(+)(out). It catalyses the reaction pyruvate(out) + H(+)(out) = pyruvate(in) + H(+)(in). The catalysed reaction is acetate(out) + H(+)(out) = acetate(in) + H(+)(in). Inhibited by the Malaria Box compound MMV007839 and its derivatives BH296 and BH267.meta. Functionally, monocarboxylate-proton symporter that mediates the efflux of the waste product lactate in the intraerythrocytic parasites; active in acidic-to-neutral pH range. Transports L-lactate. This Plasmodium ovale protein is Formate-nitrite transporter.